The primary structure comprises 210 residues: MTNWNYQLTHFVTSAPDIRHLPADTGIEVAFAGRSNAGKSSALNTLTNQKSLARTSKTPGRTQLINLFEVAEGKRLVDLPGYGYAQVPEEMKIKWQRALGEYLEKRLCLKGLVVLMDIRHPLKDLDQQMIEWAVESDIQVLVLLTKADKLASGARKAQVNMVREAVLAFNGDIQVEPFSSLKKSGVDKLRQKLDSWFNEIPPQEAVEDAE.

Residues 25-199 (TGIEVAFAGR…RQKLDSWFNE (175 aa)) enclose the EngB-type G domain. GTP contacts are provided by residues 33 to 40 (GRSNAGKS), 60 to 64 (GRTQL), 78 to 81 (DLPG), 145 to 148 (TKAD), and 178 to 180 (FSS). Mg(2+) is bound by residues S40 and T62.

This sequence belongs to the TRAFAC class TrmE-Era-EngA-EngB-Septin-like GTPase superfamily. EngB GTPase family. It depends on Mg(2+) as a cofactor.

Necessary for normal cell division and for the maintenance of normal septation. In Klebsiella pneumoniae (strain 342), this protein is Probable GTP-binding protein EngB.